Reading from the N-terminus, the 267-residue chain is UPF0173 metal-dependent hydrolase THEYE_A0282 (267 aa).

The protein belongs to the UPF0173 family.

In Thermodesulfovibrio yellowstonii (strain ATCC 51303 / DSM 11347 / YP87), this protein is UPF0173 metal-dependent hydrolase THEYE_A0282.